A 97-amino-acid polypeptide reads, in one-letter code: Large ribosomal subunit protein bL28 (97 aa).

The protein belongs to the bacterial ribosomal protein bL28 family.

This is Large ribosomal subunit protein bL28 from Nitrobacter winogradskyi (strain ATCC 25391 / DSM 10237 / CIP 104748 / NCIMB 11846 / Nb-255).